We begin with the raw amino-acid sequence, 318 residues long: MDARSELHHYNPYRVFSRSEWANLRQDTPMTLDAGEVSTLRSLHDRLDLSEVEEIYLPMSRLLSIHVGAMQQLYYAQRRFLGVVERKMPYIIGVAGSVAVGKSTTARVLQALLARWSPRPKVDLITTDGFLHPNAVLERAGLMQKKGFPESYDLPALLAFLSDIKSGRRKVRAPIYSHLTYDIVPNKFAVVDRPDILIVEGVNVLQTGRLPRDGKAVPVVSDFFDFSVYIDADEPVLRDWYIRRFLALRDTAFHDPRSYFHRYAPLSDEEATATAIAIWERTNLANLEDNILPTRPRATLILKKGADHVVDSVALRRL.

Residue 96–103 (GSVAVGKS) coordinates ATP.

Belongs to the prokaryotic pantothenate kinase family.

It is found in the cytoplasm. The catalysed reaction is (R)-pantothenate + ATP = (R)-4'-phosphopantothenate + ADP + H(+). The protein operates within cofactor biosynthesis; coenzyme A biosynthesis; CoA from (R)-pantothenate: step 1/5. This is Pantothenate kinase from Rhodopseudomonas palustris (strain HaA2).